Consider the following 431-residue polypeptide: UPF0597 protein LCA_0156 (431 aa).

The protein belongs to the UPF0597 family.

This Latilactobacillus sakei subsp. sakei (strain 23K) (Lactobacillus sakei subsp. sakei) protein is UPF0597 protein LCA_0156.